Consider the following 281-residue polypeptide: NADPH-dependent 7-cyano-7-deazaguanine reductase (281 aa).

81–83 contributes to the substrate binding site; it reads IES. Residue 83 to 84 coordinates NADPH; the sequence is SK. Cys188 functions as the Thioimide intermediate in the catalytic mechanism. Catalysis depends on Asp195, which acts as the Proton donor. 227–228 is a substrate binding site; that stretch reads HE. 256 to 257 is an NADPH binding site; it reads RG.

It belongs to the GTP cyclohydrolase I family. QueF type 2 subfamily. In terms of assembly, homodimer.

It is found in the cytoplasm. The enzyme catalyses 7-aminomethyl-7-carbaguanine + 2 NADP(+) = 7-cyano-7-deazaguanine + 2 NADPH + 3 H(+). Its pathway is tRNA modification; tRNA-queuosine biosynthesis. Catalyzes the NADPH-dependent reduction of 7-cyano-7-deazaguanine (preQ0) to 7-aminomethyl-7-deazaguanine (preQ1). The sequence is that of NADPH-dependent 7-cyano-7-deazaguanine reductase from Polaromonas naphthalenivorans (strain CJ2).